A 224-amino-acid chain; its full sequence is 7-cyano-7-deazaguanine synthase (224 aa).

Residue 8–18 participates in ATP binding; the sequence is LSGGMDSAAVI. Residues Cys-186, Cys-196, Cys-199, and Cys-202 each contribute to the Zn(2+) site.

This sequence belongs to the QueC family. It depends on Zn(2+) as a cofactor.

The catalysed reaction is 7-carboxy-7-deazaguanine + NH4(+) + ATP = 7-cyano-7-deazaguanine + ADP + phosphate + H2O + H(+). The protein operates within purine metabolism; 7-cyano-7-deazaguanine biosynthesis. In terms of biological role, catalyzes the ATP-dependent conversion of 7-carboxy-7-deazaguanine (CDG) to 7-cyano-7-deazaguanine (preQ(0)). The chain is 7-cyano-7-deazaguanine synthase from Xanthomonas euvesicatoria pv. vesicatoria (strain 85-10) (Xanthomonas campestris pv. vesicatoria).